The following is a 111-amino-acid chain: uncharacterized protein (111 aa).

Residues methionine 1 to valine 26 form a disordered region.

This is an uncharacterized protein from Caenorhabditis elegans.